Consider the following 286-residue polypeptide: Release factor glutamine methyltransferase (286 aa).

S-adenosyl-L-methionine is bound by residues D148 and N194. 194–197 (NPPY) lines the substrate pocket.

The protein belongs to the protein N5-glutamine methyltransferase family. PrmC subfamily.

It catalyses the reaction L-glutaminyl-[peptide chain release factor] + S-adenosyl-L-methionine = N(5)-methyl-L-glutaminyl-[peptide chain release factor] + S-adenosyl-L-homocysteine + H(+). In terms of biological role, methylates the class 1 translation termination release factors RF1/PrfA and RF2/PrfB on the glutamine residue of the universally conserved GGQ motif. This is Release factor glutamine methyltransferase from Leptospira interrogans serogroup Icterohaemorrhagiae serovar Lai (strain 56601).